A 161-amino-acid polypeptide reads, in one-letter code: Phosphopantetheine adenylyltransferase (161 aa).

Residue T9 coordinates substrate. ATP contacts are provided by residues 9-10 (TF) and H17. Positions 41, 73, and 87 each coordinate substrate. Residues 88–90 (GLR), E98, and 123–129 (YSFISST) contribute to the ATP site.

Belongs to the bacterial CoaD family. Homohexamer. Mg(2+) is required as a cofactor.

It is found in the cytoplasm. The enzyme catalyses (R)-4'-phosphopantetheine + ATP + H(+) = 3'-dephospho-CoA + diphosphate. It functions in the pathway cofactor biosynthesis; coenzyme A biosynthesis; CoA from (R)-pantothenate: step 4/5. In terms of biological role, reversibly transfers an adenylyl group from ATP to 4'-phosphopantetheine, yielding dephospho-CoA (dPCoA) and pyrophosphate. In Pseudomonas putida (strain ATCC 47054 / DSM 6125 / CFBP 8728 / NCIMB 11950 / KT2440), this protein is Phosphopantetheine adenylyltransferase.